The chain runs to 826 residues: MSRFFAGGSDSDDSSSDEDLYGSGSESGSDFSQDEQDGGDDNDDDMSDDSMFADDSDDDSDDDEDLGGKGASYFLKSSTVADSDDEEDTGKKTVLSAKDKLLAELANCSKLIDNGKRINDWVLIQGEFDKLNKAMERFTKQRHGLPPKVYIQCIVELEEFLNTQLEDKAGIKKMNASNSRAFNTVKQRVRKNNKEYEAAIAKYSSGGDVAEEEEEENKEDKPKPRAKDEFVLTAPSQASNEEFTTVGKAGKALVSPTDMFKTLKTVLESRGKKNTDREDQVRQLENLLPSASTVYQKISVYTMLVSTRLDLSSASAALAPENWLKVVGDLNDLLSILEENIDTYHVIETAPEIEDVEKGPVAREDGVKLIPGSVASLVERVDDEFTKALQFMDPHTTEYVDRLRDETKLYQTLLRVQMYIEHVSDEKDTLGLARILVRRVDHLYFKPNNVINMTEQIAWGGVKGDSKATPRPTEKDLTSSTYPTTLISNMCSVLYKQSNTVFRTKAMLAHVYHYALNDEYYKARDMFLMSHLQSSIASAEPQLQVLFNRTLVQLGLCAFRSGLIAEAQQSLQEVCSSPRLKELLGQGLAKYAQAGVVDKQRVLPFHTHINLELLECVFLCSSLLMEIPFMAAHNTSIDAKKKVISKLFRRMLDYHERQVFCGPPENTRDHIMQAAKALQRGDWEAARDLVCAIKIWSLLPNPEAIKAMLTDKLQIEGLRTYLFTYWNHYSTLSLSTLADMFQLPVKDVAAIVAKMIAQEELPGSLDQKTNSVVFTQAVQQTKLQQLAVALSDKVIQLAERNERLVAGGYQFDKMTQPQKRKTQRAR.

Disordered stretches follow at residues 1 to 71 (MSRF…GKGA) and 205 to 227 (SGGD…PRAK). The segment covering 10–20 (DSDDSSSDEDL) has biased composition (acidic residues). Low complexity predominate over residues 21 to 30 (YGSGSESGSD). A compositionally biased stretch (acidic residues) spans 32-65 (SQDEQDGGDDNDDDMSDDSMFADDSDDDSDDDED). Positions 218–227 (KEDKPKPRAK) are enriched in basic and acidic residues. Residues 605–779 (FHTHINLELL…NSVVFTQAVQ (175 aa)) enclose the PCI domain.

This sequence belongs to the eIF-3 subunit C family. As to quaternary structure, component of the eukaryotic translation initiation factor 3 (eIF-3) complex.

It localises to the cytoplasm. Component of the eukaryotic translation initiation factor 3 (eIF-3) complex, which is involved in protein synthesis of a specialized repertoire of mRNAs and, together with other initiation factors, stimulates binding of mRNA and methionyl-tRNAi to the 40S ribosome. The eIF-3 complex specifically targets and initiates translation of a subset of mRNAs involved in cell proliferation. The protein is Eukaryotic translation initiation factor 3 subunit C of Yarrowia lipolytica (strain CLIB 122 / E 150) (Yeast).